Here is a 23-residue protein sequence, read N- to C-terminus: Phospholipase A2 homolog 4 (23 aa).

This sequence belongs to the phospholipase A2 family. Group II subfamily. K49 sub-subfamily. In terms of assembly, homodimer; non-covalently linked (probable alternative/compact dimer conformation in solution). As to expression, expressed by the venom gland.

Its subcellular location is the secreted. Functionally, snake venom phospholipase A2 homolog that lacks enzymatic activity. Induces acute muscle damage after intramuscular injection in mice and disrupts negatively charged liposomes but not positively charged ones. Also exerts a weak anticoagulant effect only at concentrations of 40 ug/ml or higher. A model of myotoxic mechanism has been proposed: an apo Lys49-PLA2 is activated by the entrance of a hydrophobic molecule (e.g. fatty acid) at the hydrophobic channel of the protein leading to a reorientation of a monomer. This reorientation causes a transition between 'inactive' to 'active' states, causing alignment of C-terminal and membrane-docking sites (MDoS) side-by-side and putting the membrane-disruption sites (MDiS) in the same plane, exposed to solvent and in a symmetric position for both monomers. The MDoS region stabilizes the toxin on membrane by the interaction of charged residues with phospholipid head groups. Subsequently, the MDiS region destabilizes the membrane with penetration of hydrophobic residues. This insertion causes a disorganization of the membrane, allowing an uncontrolled influx of ions (i.e. calcium and sodium), and eventually triggering irreversible intracellular alterations and cell death. The chain is Phospholipase A2 homolog 4 from Bothrops asper (Terciopelo).